We begin with the raw amino-acid sequence, 765 residues long: Membrane metallo-endopeptidase-like 1 (765 aa).

Residues M1 to G19 lie on the Cytoplasmic side of the membrane. The chain crosses the membrane as a helical; Signal-anchor for type II membrane protein span at residues L20 to I40. The Lumenal portion of the chain corresponds to G41–W765. One can recognise a Peptidase M13 domain in the interval I74–W765. 5 cysteine pairs are disulfide-bonded: C75/C80, C98/C750, C106/C710, C161/C425, and C636/C762. Position 121 (R121) interacts with a peptide. N-linked (GlcNAc...) asparagine glycosylation is found at N163, N279, N303, and N336. Positions F523–L549 form a coiled coil. H599 provides a ligand contact to Zn(2+). The active site involves E600. H603 and E662 together coordinate Zn(2+). The active-site Proton donor is D666. An N-linked (GlcNAc...) asparagine glycan is attached at N694.

It belongs to the peptidase M13 family. It depends on Zn(2+) as a cofactor. In terms of processing, N-glycosylated. In terms of tissue distribution, highly expressed in testis. Also expressed in ovary. Weakly or not expressed in brain, lung, heart, liver, kidney, adrenal gland and intestine.

Its subcellular location is the membrane. It is found in the secreted. The catalysed reaction is Preferential cleavage of polypeptides between hydrophobic residues, particularly with Phe or Tyr at P1'.. Inhibited by thiorphan and phosphoramidon. Its function is as follows. Metalloprotease involved in sperm function, possibly by modulating the processes of fertilization and early embryonic development. Degrades a broad variety of small peptides with a preference for peptides shorter than 3 kDa containing neutral bulky aliphatic or aromatic amino acid residues. Shares the same substrate specificity with MME and cleaves peptides at the same amide bond. The protein is Membrane metallo-endopeptidase-like 1 (Mmel1) of Mus musculus (Mouse).